Reading from the N-terminus, the 416-residue chain is UDP-N-acetylglucosamine 1-carboxyvinyltransferase (416 aa).

Residue 22–23 participates in phosphoenolpyruvate binding; that stretch reads KN. R92 is a UDP-N-acetyl-alpha-D-glucosamine binding site. The active-site Proton donor is C116. C116 is subject to 2-(S-cysteinyl)pyruvic acid O-phosphothioketal. Residues 121–125, D304, and I326 contribute to the UDP-N-acetyl-alpha-D-glucosamine site; that span reads RPIDQ.

Belongs to the EPSP synthase family. MurA subfamily.

Its subcellular location is the cytoplasm. It catalyses the reaction phosphoenolpyruvate + UDP-N-acetyl-alpha-D-glucosamine = UDP-N-acetyl-3-O-(1-carboxyvinyl)-alpha-D-glucosamine + phosphate. It functions in the pathway cell wall biogenesis; peptidoglycan biosynthesis. Cell wall formation. Adds enolpyruvyl to UDP-N-acetylglucosamine. In Desulfatibacillum aliphaticivorans, this protein is UDP-N-acetylglucosamine 1-carboxyvinyltransferase.